Consider the following 201-residue polypeptide: Superoxide dismutase [Mn] (201 aa).

Positions 27, 81, 163, and 167 each coordinate Mn(2+).

This sequence belongs to the iron/manganese superoxide dismutase family. As to quaternary structure, homodimer. Mn(2+) serves as cofactor.

It is found in the secreted. It catalyses the reaction 2 superoxide + 2 H(+) = H2O2 + O2. Its function is as follows. Destroys superoxide anion radicals which are normally produced within the cells and which are toxic to biological systems. This Streptococcus pyogenes serotype M18 (strain MGAS8232) protein is Superoxide dismutase [Mn] (sodA).